Reading from the N-terminus, the 433-residue chain is ATP-dependent protease ATPase subunit HslU (433 aa).

Residues valine 18, 60–65, aspartate 246, glutamate 311, and arginine 383 contribute to the ATP site; that span reads GVGKTE.

Belongs to the ClpX chaperone family. HslU subfamily. In terms of assembly, a double ring-shaped homohexamer of HslV is capped on each side by a ring-shaped HslU homohexamer. The assembly of the HslU/HslV complex is dependent on binding of ATP.

It localises to the cytoplasm. Functionally, ATPase subunit of a proteasome-like degradation complex; this subunit has chaperone activity. The binding of ATP and its subsequent hydrolysis by HslU are essential for unfolding of protein substrates subsequently hydrolyzed by HslV. HslU recognizes the N-terminal part of its protein substrates and unfolds these before they are guided to HslV for hydrolysis. In Rhodopseudomonas palustris (strain BisB5), this protein is ATP-dependent protease ATPase subunit HslU.